The chain runs to 265 residues: Exosome complex component RRP42 (265 aa).

The protein belongs to the RNase PH family. Component of the RNA exosome complex. Specifically part of the catalytically inactive RNA exosome core complex (Exo-9) which may associate with the catalytic subunits RRP6 and DIS3 in cytoplasmic- and nuclear-specific RNA exosome complex forms. Exo-9 is formed by a hexameric base ring of RNase PH domain-containing subunits and a cap ring consisting of CSL4, RRP4 and RRP40.

It localises to the cytoplasm. Its subcellular location is the nucleus. It is found in the nucleolus. Its function is as follows. Non-catalytic component of the RNA exosome complex which has 3'-&gt;5' exoribonuclease activity and participates in a multitude of cellular RNA processing and degradation events. In the nucleus, the RNA exosome complex is involved in proper maturation of stable RNA species such as rRNA, snRNA and snoRNA, in the elimination of RNA processing by-products and non-coding 'pervasive' transcripts, such as antisense RNA species and cryptic unstable transcripts (CUTs), and of mRNAs with processing defects, thereby limiting or excluding their export to the cytoplasm. In the cytoplasm, the RNA exosome complex is involved in general mRNA turnover and in RNA surveillance pathways, preventing translation of aberrant mRNAs. The catalytic inactive RNA exosome core complex of 9 subunits (Exo-9) is proposed to play a pivotal role in the binding and presentation of RNA for ribonucleolysis, and to serve as a scaffold for the association with catalytic subunits and accessory proteins or complexes. RRP42 is part of the hexameric ring of RNase PH domain-containing subunits proposed to form a central channel which threads RNA substrates for degradation. In Saccharomyces cerevisiae (strain ATCC 204508 / S288c) (Baker's yeast), this protein is Exosome complex component RRP42 (RRP42).